The sequence spans 281 residues: 2-dehydro-3-deoxyphosphooctonate aldolase (281 aa).

Belongs to the KdsA family.

It is found in the cytoplasm. It catalyses the reaction D-arabinose 5-phosphate + phosphoenolpyruvate + H2O = 3-deoxy-alpha-D-manno-2-octulosonate-8-phosphate + phosphate. Its pathway is carbohydrate biosynthesis; 3-deoxy-D-manno-octulosonate biosynthesis; 3-deoxy-D-manno-octulosonate from D-ribulose 5-phosphate: step 2/3. It participates in bacterial outer membrane biogenesis; lipopolysaccharide biosynthesis. The sequence is that of 2-dehydro-3-deoxyphosphooctonate aldolase from Janthinobacterium sp. (strain Marseille) (Minibacterium massiliensis).